Reading from the N-terminus, the 324-residue chain is NADH-ubiquinone oxidoreductase chain 1 (324 aa).

8 helical membrane passes run 9–29, 75–95, 106–126, 146–166, 178–198, 212–232, 259–279, and 299–319; these read LINP…LTLV, ILFL…WAPM, LGIL…LGSG, ISYE…SGGY, TWLL…TLAE, ELVS…FFLA, ELMT…FLWM, and FLPI…ALAG.

This sequence belongs to the complex I subunit 1 family. Core subunit of respiratory chain NADH dehydrogenase (Complex I) which is composed of 45 different subunits.

It is found in the mitochondrion inner membrane. It catalyses the reaction a ubiquinone + NADH + 5 H(+)(in) = a ubiquinol + NAD(+) + 4 H(+)(out). Core subunit of the mitochondrial membrane respiratory chain NADH dehydrogenase (Complex I) which catalyzes electron transfer from NADH through the respiratory chain, using ubiquinone as an electron acceptor. Essential for the catalytic activity and assembly of complex I. The sequence is that of NADH-ubiquinone oxidoreductase chain 1 (mt-nd1) from Danio rerio (Zebrafish).